The chain runs to 208 residues: MFVSTAFAQTATESQPASTAGEHGAADAVHTETGVAHDAGHGSGVFPPFDSTHYASQVLWLAITFGLFYLFLSRVVLPRIGGVIETRRDRIAQDLEQAARLKQDADNAIAAYEQELAQARSKAASIAEAAREKGKGEADAERASAEAVLESKLKEAEERIAAIKAKAMSDVGNIAEETMATIVEQLLGLTADKASVSEAVKAIRASNA.

Over residues 1 to 18 (MFVSTAFAQTATESQPAS) the composition is skewed to polar residues. The segment at 1–26 (MFVSTAFAQTATESQPASTAGEHGAA) is disordered. The chain crosses the membrane as a helical span at residues 56 to 78 (SQVLWLAITFGLFYLFLSRVVLP).

It belongs to the ATPase B chain family. As to quaternary structure, F-type ATPases have 2 components, F(1) - the catalytic core - and F(0) - the membrane proton channel. F(1) has five subunits: alpha(3), beta(3), gamma(1), delta(1), epsilon(1). F(0) has three main subunits: a(1), b(2) and c(10-14). The alpha and beta chains form an alternating ring which encloses part of the gamma chain. F(1) is attached to F(0) by a central stalk formed by the gamma and epsilon chains, while a peripheral stalk is formed by the delta and b chains.

It is found in the cell inner membrane. In terms of biological role, f(1)F(0) ATP synthase produces ATP from ADP in the presence of a proton or sodium gradient. F-type ATPases consist of two structural domains, F(1) containing the extramembraneous catalytic core and F(0) containing the membrane proton channel, linked together by a central stalk and a peripheral stalk. During catalysis, ATP synthesis in the catalytic domain of F(1) is coupled via a rotary mechanism of the central stalk subunits to proton translocation. Component of the F(0) channel, it forms part of the peripheral stalk, linking F(1) to F(0). This Brucella melitensis biotype 1 (strain ATCC 23456 / CCUG 17765 / NCTC 10094 / 16M) protein is ATP synthase subunit b.